Consider the following 212-residue polypeptide: Ras-like protein (212 aa).

A GTP-binding site is contributed by 15–22 (GGGGVGKS). The short motif at 37–45 (YDPTIEDSY) is the Effector region element. GTP is bound by residues 62–66 (DTAGQ) and 121–124 (NKCD). 2 S-palmitoyl cysteine lipidation sites follow: cysteine 205 and cysteine 206. Cysteine 209 is modified (cysteine methyl ester). Residue cysteine 209 is the site of S-geranylgeranyl cysteine attachment. The propeptide at 210–212 (IVM) is removed in mature form.

It belongs to the small GTPase superfamily. Ras family.

It localises to the cell membrane. It carries out the reaction GTP + H2O = GDP + phosphate + H(+). Its activity is regulated as follows. Alternates between an inactive form bound to GDP and an active form bound to GTP. Activated by a guanine nucleotide-exchange factor (GEF) and inactivated by a GTPase-activating protein (GAP). This is Ras-like protein (rasA) from Emericella nidulans (strain FGSC A4 / ATCC 38163 / CBS 112.46 / NRRL 194 / M139) (Aspergillus nidulans).